Here is a 139-residue protein sequence, read N- to C-terminus: Thioredoxin 2 (139 aa).

The segment at 5-18 (CTHCQAINRIPDDR) is a zinc-finger region. One can recognise a Thioredoxin domain in the interval 26-139 (GRCGHDLFDG…PFDSWLNESL (114 aa)). An intrachain disulfide couples Cys-64 to Cys-67.

Belongs to the thioredoxin family.

Its subcellular location is the cytoplasm. The enzyme catalyses [protein]-dithiol + NAD(+) = [protein]-disulfide + NADH + H(+). It carries out the reaction [protein]-dithiol + NADP(+) = [protein]-disulfide + NADPH + H(+). Functionally, efficient electron donor for the essential enzyme ribonucleotide reductase. Is also able to reduce the interchain disulfide bridges of insulin. This Escherichia coli O6:H1 (strain CFT073 / ATCC 700928 / UPEC) protein is Thioredoxin 2 (trxC).